Reading from the N-terminus, the 155-residue chain is 6,7-dimethyl-8-ribityllumazine synthase (155 aa).

5-amino-6-(D-ribitylamino)uracil-binding positions include F26, 60–62 (ALE), and 84–86 (AVI). 89-90 (ET) provides a ligand contact to (2S)-2-hydroxy-3-oxobutyl phosphate. H92 functions as the Proton donor in the catalytic mechanism. Residue N117 participates in 5-amino-6-(D-ribitylamino)uracil binding. Position 131 (R131) interacts with (2S)-2-hydroxy-3-oxobutyl phosphate.

Belongs to the DMRL synthase family.

It carries out the reaction (2S)-2-hydroxy-3-oxobutyl phosphate + 5-amino-6-(D-ribitylamino)uracil = 6,7-dimethyl-8-(1-D-ribityl)lumazine + phosphate + 2 H2O + H(+). The protein operates within cofactor biosynthesis; riboflavin biosynthesis; riboflavin from 2-hydroxy-3-oxobutyl phosphate and 5-amino-6-(D-ribitylamino)uracil: step 1/2. In terms of biological role, catalyzes the formation of 6,7-dimethyl-8-ribityllumazine by condensation of 5-amino-6-(D-ribitylamino)uracil with 3,4-dihydroxy-2-butanone 4-phosphate. This is the penultimate step in the biosynthesis of riboflavin. The chain is 6,7-dimethyl-8-ribityllumazine synthase from Chromobacterium violaceum (strain ATCC 12472 / DSM 30191 / JCM 1249 / CCUG 213 / NBRC 12614 / NCIMB 9131 / NCTC 9757 / MK).